The chain runs to 361 residues: Queuine tRNA-ribosyltransferase (361 aa).

The Proton acceptor role is filled by aspartate 92. Substrate is bound by residues 92–96 (DSGGF), aspartate 146, glutamine 189, and glycine 216. Residues 247-253 (GVGKPAD) are RNA binding. The active-site Nucleophile is aspartate 266. An RNA binding; important for wobble base 34 recognition region spans residues 271–275 (TRSGR). 4 residues coordinate Zn(2+): cysteine 304, cysteine 306, cysteine 309, and histidine 335.

Belongs to the queuine tRNA-ribosyltransferase family. As to quaternary structure, homodimer. Within each dimer, one monomer is responsible for RNA recognition and catalysis, while the other monomer binds to the replacement base PreQ1. The cofactor is Zn(2+).

It carries out the reaction 7-aminomethyl-7-carbaguanine + guanosine(34) in tRNA = 7-aminomethyl-7-carbaguanosine(34) in tRNA + guanine. It functions in the pathway tRNA modification; tRNA-queuosine biosynthesis. In terms of biological role, catalyzes the base-exchange of a guanine (G) residue with the queuine precursor 7-aminomethyl-7-deazaguanine (PreQ1) at position 34 (anticodon wobble position) in tRNAs with GU(N) anticodons (tRNA-Asp, -Asn, -His and -Tyr). Catalysis occurs through a double-displacement mechanism. The nucleophile active site attacks the C1' of nucleotide 34 to detach the guanine base from the RNA, forming a covalent enzyme-RNA intermediate. The proton acceptor active site deprotonates the incoming PreQ1, allowing a nucleophilic attack on the C1' of the ribose to form the product. After dissociation, two additional enzymatic reactions on the tRNA convert PreQ1 to queuine (Q), resulting in the hypermodified nucleoside queuosine (7-(((4,5-cis-dihydroxy-2-cyclopenten-1-yl)amino)methyl)-7-deazaguanosine). The protein is Queuine tRNA-ribosyltransferase of Rickettsia peacockii (strain Rustic).